A 393-amino-acid chain; its full sequence is Chalcone synthase 1 (393 aa).

Cysteine 166 is a catalytic residue.

It belongs to the thiolase-like superfamily. Chalcone/stilbene synthases family.

The catalysed reaction is (E)-4-coumaroyl-CoA + 3 malonyl-CoA + 3 H(+) = 2',4,4',6'-tetrahydroxychalcone + 3 CO2 + 4 CoA. The protein operates within secondary metabolite biosynthesis; flavonoid biosynthesis. In terms of biological role, the primary product of this enzyme is 4,2',4',6'-tetrahydroxychalcone (also termed naringenin-chalcone or chalcone) which can under specific conditions spontaneously isomerize into naringenin. This chain is Chalcone synthase 1 (CHS1), found in Ruta graveolens (Common rue).